A 344-amino-acid chain; its full sequence is tRNA N6-adenosine threonylcarbamoyltransferase (344 aa).

Residues His-112 and His-116 each coordinate Fe cation. Residues 135-139, Asp-168, Gly-181, and Asn-271 each bind substrate; that span reads LVSGG. Fe cation is bound at residue Asp-299.

Belongs to the KAE1 / TsaD family. The cofactor is Fe(2+).

It localises to the cytoplasm. The catalysed reaction is L-threonylcarbamoyladenylate + adenosine(37) in tRNA = N(6)-L-threonylcarbamoyladenosine(37) in tRNA + AMP + H(+). Required for the formation of a threonylcarbamoyl group on adenosine at position 37 (t(6)A37) in tRNAs that read codons beginning with adenine. Is involved in the transfer of the threonylcarbamoyl moiety of threonylcarbamoyl-AMP (TC-AMP) to the N6 group of A37, together with TsaE and TsaB. TsaD likely plays a direct catalytic role in this reaction. The protein is tRNA N6-adenosine threonylcarbamoyltransferase of Sphingopyxis alaskensis (strain DSM 13593 / LMG 18877 / RB2256) (Sphingomonas alaskensis).